We begin with the raw amino-acid sequence, 236 residues long: Demethylmenaquinone methyltransferase (236 aa).

S-adenosyl-L-methionine contacts are provided by residues T62, D80, 107–108 (DA), and S124.

Belongs to the class I-like SAM-binding methyltransferase superfamily. MenG/UbiE family.

The catalysed reaction is a 2-demethylmenaquinol + S-adenosyl-L-methionine = a menaquinol + S-adenosyl-L-homocysteine + H(+). Its pathway is quinol/quinone metabolism; menaquinone biosynthesis; menaquinol from 1,4-dihydroxy-2-naphthoate: step 2/2. In terms of biological role, methyltransferase required for the conversion of demethylmenaquinol (DMKH2) to menaquinol (MKH2). The chain is Demethylmenaquinone methyltransferase from Thermobifida fusca (strain YX).